The chain runs to 213 residues: Holliday junction branch migration complex subunit RuvA (213 aa).

Positions 1–64 (MIASVTGEVA…DEAPLLFGFA (64 aa)) are domain I. The interval 65-143 (QGDEKEIFTV…LPEPPVQQAN (79 aa)) is domain II. The tract at residues 144-152 (QPQVPVWRD) is flexible linker. The segment at 152–213 (DQVVDALTGL…GTTHAPTGRR (62 aa)) is domain III.

This sequence belongs to the RuvA family. As to quaternary structure, homotetramer. Forms an RuvA(8)-RuvB(12)-Holliday junction (HJ) complex. HJ DNA is sandwiched between 2 RuvA tetramers; dsDNA enters through RuvA and exits via RuvB. An RuvB hexamer assembles on each DNA strand where it exits the tetramer. Each RuvB hexamer is contacted by two RuvA subunits (via domain III) on 2 adjacent RuvB subunits; this complex drives branch migration. In the full resolvosome a probable DNA-RuvA(4)-RuvB(12)-RuvC(2) complex forms which resolves the HJ.

The protein localises to the cytoplasm. In terms of biological role, the RuvA-RuvB-RuvC complex processes Holliday junction (HJ) DNA during genetic recombination and DNA repair, while the RuvA-RuvB complex plays an important role in the rescue of blocked DNA replication forks via replication fork reversal (RFR). RuvA specifically binds to HJ cruciform DNA, conferring on it an open structure. The RuvB hexamer acts as an ATP-dependent pump, pulling dsDNA into and through the RuvAB complex. HJ branch migration allows RuvC to scan DNA until it finds its consensus sequence, where it cleaves and resolves the cruciform DNA. This chain is Holliday junction branch migration complex subunit RuvA, found in Kocuria rhizophila (strain ATCC 9341 / DSM 348 / NBRC 103217 / DC2201).